A 207-amino-acid chain; its full sequence is Octanoyltransferase (207 aa).

Residues 29-204 (AETRDELWVV…HLERHLSTSK (176 aa)) enclose the BPL/LPL catalytic domain. Substrate-binding positions include 68 to 75 (RGGQITYH), 135 to 137 (SLG), and 148 to 150 (GLS). Cysteine 166 (acyl-thioester intermediate) is an active-site residue.

It belongs to the LipB family.

Its subcellular location is the cytoplasm. The catalysed reaction is octanoyl-[ACP] + L-lysyl-[protein] = N(6)-octanoyl-L-lysyl-[protein] + holo-[ACP] + H(+). It functions in the pathway protein modification; protein lipoylation via endogenous pathway; protein N(6)-(lipoyl)lysine from octanoyl-[acyl-carrier-protein]: step 1/2. Catalyzes the transfer of endogenously produced octanoic acid from octanoyl-acyl-carrier-protein onto the lipoyl domains of lipoate-dependent enzymes. Lipoyl-ACP can also act as a substrate although octanoyl-ACP is likely to be the physiological substrate. This is Octanoyltransferase from Chromobacterium violaceum (strain ATCC 12472 / DSM 30191 / JCM 1249 / CCUG 213 / NBRC 12614 / NCIMB 9131 / NCTC 9757 / MK).